The following is a 38-amino-acid chain: Small ribosomal subunit protein eS32 (38 aa).

Belongs to the eukaryotic ribosomal protein eS32 family. As to quaternary structure, component of the small ribosomal subunit (SSU).

This Methanocaldococcus jannaschii (strain ATCC 43067 / DSM 2661 / JAL-1 / JCM 10045 / NBRC 100440) (Methanococcus jannaschii) protein is Small ribosomal subunit protein eS32 (rpl41e).